The primary structure comprises 66 residues: ATP synthase subunit c (66 aa).

The next 2 helical transmembrane spans lie at 3-23 (LTFF…GMLM) and 45-65 (IMGI…SFVI).

Belongs to the ATPase C chain family. F-type ATPases have 2 components, F(1) - the catalytic core - and F(0) - the membrane proton channel. F(1) has five subunits: alpha(3), beta(3), gamma(1), delta(1), epsilon(1). F(0) has three main subunits: a(1), b(2) and c(10-14). The alpha and beta chains form an alternating ring which encloses part of the gamma chain. F(1) is attached to F(0) by a central stalk formed by the gamma and epsilon chains, while a peripheral stalk is formed by the delta and b chains.

It localises to the cell membrane. F(1)F(0) ATP synthase produces ATP from ADP in the presence of a proton or sodium gradient. F-type ATPases consist of two structural domains, F(1) containing the extramembraneous catalytic core and F(0) containing the membrane proton channel, linked together by a central stalk and a peripheral stalk. During catalysis, ATP synthesis in the catalytic domain of F(1) is coupled via a rotary mechanism of the central stalk subunits to proton translocation. Its function is as follows. Key component of the F(0) channel; it plays a direct role in translocation across the membrane. A homomeric c-ring of between 10-14 subunits forms the central stalk rotor element with the F(1) delta and epsilon subunits. The polypeptide is ATP synthase subunit c (atpE) (Streptococcus oralis).